The following is a 325-amino-acid chain: Beta-ketoacyl-[acyl-carrier-protein] synthase III (325 aa).

Catalysis depends on residues Cys112 and His250. An ACP-binding region spans residues 251 to 255; sequence QANIR. Asn280 is an active-site residue.

The protein belongs to the thiolase-like superfamily. FabH family. Homodimer.

The protein localises to the cytoplasm. It catalyses the reaction malonyl-[ACP] + acetyl-CoA + H(+) = 3-oxobutanoyl-[ACP] + CO2 + CoA. The protein operates within lipid metabolism; fatty acid biosynthesis. Catalyzes the condensation reaction of fatty acid synthesis by the addition to an acyl acceptor of two carbons from malonyl-ACP. Catalyzes the first condensation reaction which initiates fatty acid synthesis and may therefore play a role in governing the total rate of fatty acid production. Possesses both acetoacetyl-ACP synthase and acetyl transacylase activities. Its substrate specificity determines the biosynthesis of branched-chain and/or straight-chain of fatty acids. The protein is Beta-ketoacyl-[acyl-carrier-protein] synthase III of Clostridium acetobutylicum (strain ATCC 824 / DSM 792 / JCM 1419 / IAM 19013 / LMG 5710 / NBRC 13948 / NRRL B-527 / VKM B-1787 / 2291 / W).